The primary structure comprises 431 residues: Alpha-gurjunene synthase (431 aa).

2 residues coordinate Mg(2+): Asp-126 and Asp-130. Arg-267 serves as a coordination point for (2E,6E)-farnesyl diphosphate. 2 residues coordinate Mg(2+): Asn-321 and Ser-325. Lys-328 provides a ligand contact to (2E,6E)-farnesyl diphosphate. Glu-329 lines the Mg(2+) pocket. Residue 412–413 participates in (2E,6E)-farnesyl diphosphate binding; the sequence is RY.

Belongs to the terpene synthase family. It depends on Mg(2+) as a cofactor.

It carries out the reaction (2E,6E)-farnesyl diphosphate = (-)-alpha-gurjunene + diphosphate. The enzyme catalyses (2E,6E)-farnesyl diphosphate + H2O = 5-hydroxy-alpha-gurjunene + diphosphate. Its pathway is secondary metabolite biosynthesis; terpenoid biosynthesis. Its function is as follows. Catalyzes the conversion of (2E,6E)-farnesyl diphosphate (FPP) into the sesquiterpene alcohols (-)-alpha-gurjunene and 5-hydroxy-alpha-gurjunene. Other unidentified sesquiterpene alcohols found to be catalyzed by MTPSL4 may arise from carbocation reaction intermediates along the catalytic cascade to gurjunene being quenched by a water molecule, yielding formation of the alcohols. The sequence is that of Alpha-gurjunene synthase from Marchantia polymorpha (Common liverwort).